Consider the following 352-residue polypeptide: Ribosomal lysine N-methyltransferase 5 (352 aa).

S-adenosyl-L-methionine-binding positions include tryptophan 107, 161-163 (GSG), aspartate 183, tryptophan 244, and leucine 274.

It belongs to the class I-like SAM-binding methyltransferase superfamily. RKM5 family.

S-adenosyl-L-methionine-dependent protein-lysine N-methyltransferase that methylates 60S ribosomal protein L1. This is Ribosomal lysine N-methyltransferase 5 (RKM5) from Candida glabrata (strain ATCC 2001 / BCRC 20586 / JCM 3761 / NBRC 0622 / NRRL Y-65 / CBS 138) (Yeast).